We begin with the raw amino-acid sequence, 221 residues long: Ependymin-2 (221 aa).

A signal peptide spans 1 to 21 (MQDFAFAALSIWLCLGATALA). Asn-33, Asn-73, and Asn-97 each carry an N-linked (GlcNAc...) asparagine glycan.

The protein belongs to the ependymin family. In terms of processing, binds calcium through the terminal sialic acids. EPDs are synthesized in the meninx and secreted in the cerebrospinal fluid.

It localises to the secreted. Functionally, may play a role in neural plasticity. May be involved during axon regeneration. The polypeptide is Ependymin-2 (epd2) (Salmo salar (Atlantic salmon)).